The primary structure comprises 153 residues: Probable inactive ribonuclease-like protein 13 (153 aa).

An N-terminal signal peptide occupies residues 1–22 (MASDAASLLVLQLVLQPTLVTG).

It belongs to the pancreatic ribonuclease family.

The protein resides in the secreted. Its function is as follows. Does not exhibit any ribonuclease activity. In Rattus norvegicus (Rat), this protein is Probable inactive ribonuclease-like protein 13 (Rnase13).